The chain runs to 312 residues: Ornithine carbamoyltransferase (312 aa).

Carbamoyl phosphate contacts are provided by residues 57 to 60 (STRT), Gln-84, Arg-108, and 135 to 138 (HPCQ). Residues Asn-166, Asp-226, and 230 to 231 (SM) each bind L-ornithine. Carbamoyl phosphate-binding positions include 265-266 (CL) and Arg-293.

The protein belongs to the aspartate/ornithine carbamoyltransferase superfamily. OTCase family.

The protein resides in the cytoplasm. The enzyme catalyses carbamoyl phosphate + L-ornithine = L-citrulline + phosphate + H(+). It functions in the pathway amino-acid degradation; L-arginine degradation via ADI pathway; carbamoyl phosphate from L-arginine: step 2/2. Functionally, reversibly catalyzes the transfer of the carbamoyl group from carbamoyl phosphate (CP) to the N(epsilon) atom of ornithine (ORN) to produce L-citrulline. In Brucella abortus (strain 2308), this protein is Ornithine carbamoyltransferase.